The chain runs to 198 residues: Elongation factor Ts (198 aa).

The segment at 81–84 (TDFV) is involved in Mg(2+) ion dislocation from EF-Tu.

It belongs to the EF-Ts family.

The protein resides in the cytoplasm. Its function is as follows. Associates with the EF-Tu.GDP complex and induces the exchange of GDP to GTP. It remains bound to the aminoacyl-tRNA.EF-Tu.GTP complex up to the GTP hydrolysis stage on the ribosome. The sequence is that of Elongation factor Ts from Dictyoglomus thermophilum (strain ATCC 35947 / DSM 3960 / H-6-12).